The chain runs to 339 residues: MGSLLFSWKGTQQKDVTIKSDAPDTLLLEKHADYIASYGSKKDDYEYCMSEYLRMSGVYWGLTVMDLMGQLHRMNREEILVFIKSCQHECGGISASIGHDPHLLYTLSAVQILTLYDSVHVINVDKVVAYVQSLQKEDGSFAGDIWGEIDTRFSFCAVATLALLGKLDAINVEKAIEFVLSCMNFDGGFGCRPGSESHAGQIYCCTGFLAITSQLHQVNSDLLGWWLCERQLPSGGLNGRPEKLPDVCYSWWVLASLKIIGRLHWIDREKLRSFILACQDEETGGFADRPGDMVDPFHTLFGIAGLSLLGEEQIKPVSPVFCMPEEVLQRVNVQPELVS.

Residue Thr-11 is modified to Phosphothreonine. PFTB repeat units lie at residues 28 to 69 (LEKH…DLMG), 76 to 117 (REEI…TLYD), 124 to 165 (VDKV…ALLG), 172 to 213 (VEKA…AITS), 220 to 261 (SDLL…KIIG), and 268 to 310 (REKL…SLLG). Residues 198–200 (HAG) and 240–243 (RPEK) contribute to the geranylgeranyl diphosphate site. Residues Asp-246 and Cys-248 each coordinate Zn(2+). Geranylgeranyl diphosphate-binding positions include Tyr-249 and 249-252 (YSWW). His-298 lines the Zn(2+) pocket.

Belongs to the protein prenyltransferase subunit beta family. In terms of assembly, heterotrimer composed of RABGGTA, RABGGTB and CHM; within this trimer, RABGGTA and RABGGTB form the catalytic component B, while CHM (component A) mediates peptide substrate binding. The Rab GGTase dimer (RGGT) interacts with CHM (component A) prior to Rab protein binding; the association is stabilized by geranylgeranyl pyrophosphate (GGpp). The CHM:RGGT:Rab complex is destabilized by GGpp. Interaction of RABGGTB with prenylated PTP4A2 precludes its association with RABGGTA and inhibits enzyme activity. Interacts with CHODL. Interacts with non-phosphorylated form of RAB8A; phosphorylation of RAB8A at 'Thr-72' disrupts this interaction. The cofactor is Zn(2+). As to expression, ubiquitous. Detected in all the major organs in adult animals.

The enzyme catalyses geranylgeranyl diphosphate + L-cysteinyl-[protein] = S-geranylgeranyl-L-cysteinyl-[protein] + diphosphate. With respect to regulation, the enzymatic reaction requires the aid of a Rab escort protein (also called component A), such as CHM. In terms of biological role, catalyzes the transfer of a geranylgeranyl moiety from geranylgeranyl diphosphate to both cysteines of Rab proteins with the C-terminal sequence -XXCC, -XCXC and -CCXX, such as RAB1A, RAB3A, RAB5A and RAB7A. This chain is Geranylgeranyl transferase type-2 subunit beta (Rabggtb), found in Mus musculus (Mouse).